Here is a 156-residue protein sequence, read N- to C-terminus: Large ribosomal subunit protein uL22 (156 aa).

The protein belongs to the universal ribosomal protein uL22 family. As to quaternary structure, part of the 50S ribosomal subunit.

Functionally, this protein binds specifically to 23S rRNA. It makes multiple contacts with different domains of the 23S rRNA in the assembled 50S subunit and ribosome. Its function is as follows. The globular domain of the protein is located near the polypeptide exit tunnel on the outside of the subunit, while an extended beta-hairpin is found that lines the wall of the exit tunnel in the center of the 70S ribosome. The chain is Large ribosomal subunit protein uL22 from Methanocaldococcus jannaschii (strain ATCC 43067 / DSM 2661 / JAL-1 / JCM 10045 / NBRC 100440) (Methanococcus jannaschii).